A 639-amino-acid polypeptide reads, in one-letter code: CTTNBP2 N-terminal-like protein (639 aa).

Residues 87–285 adopt a coiled-coil conformation; sequence MKQCKNMQER…DLEASHQHSS (199 aa). Phosphoserine occurs at positions 284 and 285. Disordered stretches follow at residues 387 to 430, 463 to 490, and 511 to 609; these read VENG…PCSS, RHKF…LSPT, and RFTS…AASL. Composition is skewed to low complexity over residues 405 to 430 and 467 to 477; these read PLSS…PCSS and QSQADQDQQAS. Phosphoserine occurs at positions 481, 488, 523, 527, 560, 563, and 568. Residues 511–529 are compositionally biased toward polar residues; that stretch reads RFTSQQGPIKPVSPNSSPF. Residues Thr570 and Thr590 each carry the phosphothreonine modification. The span at 587–600 shows a compositional bias: low complexity; it reads PGLTPSPSATTPLT. Ser592 is modified (phosphoserine).

In terms of assembly, interacts with CTTN/cortactin; this interaction may redistribute CTTN to stress fibers. May form homomers. Associates with the core of STRIPAK complexes composed of PP2A catalytic and scaffolding subunits, the striatins (PP2A regulatory subunits), the striatin-associated proteins MOB4, STRIP1 and STRIP2, PDCD10 and members of the STE20 kinases, such as STK24 and STK26.

The protein localises to the cell projection. Its subcellular location is the lamellipodium. The protein resides in the cytoplasm. It is found in the cytoskeleton. It localises to the stress fiber. In terms of biological role, regulates lamellipodial actin dynamics in a CTTN-dependent manner. Associates with core striatin-interacting phosphatase and kinase (STRIPAK) complex to form CTTNBP2NL-STRIPAK complexes. STRIPAK complexes have critical roles in protein (de)phosphorylation and are regulators of multiple signaling pathways including Hippo, MAPK, nuclear receptor and cytoskeleton remodeling. Different types of STRIPAK complexes are involved in a variety of biological processes such as cell growth, differentiation, apoptosis, metabolism and immune regulation. The sequence is that of CTTNBP2 N-terminal-like protein from Homo sapiens (Human).